A 346-amino-acid polypeptide reads, in one-letter code: Autoinducer 2 import system permease protein LsrC (346 aa).

Transmembrane regions (helical) follow at residues 13–33 (LLAI…YLSV), 38–58 (MVFS…MVML), 71–91 (GMCA…PVAC), 92–112 (LATL…VAWL), 114–134 (IPAI…MLLW), 154–174 (VFLG…LMAW), 212–232 (LNGG…GFIP), 248–268 (VLGG…ILGA), and 283–303 (IPAW…LVFD).

It belongs to the binding-protein-dependent transport system permease family. AraH/RbsC subfamily. In terms of assembly, the complex is composed of two ATP-binding proteins (LsrA), two transmembrane proteins (LsrC and LsrD) and a solute-binding protein (LsrB).

The protein resides in the cell inner membrane. Part of the ABC transporter complex LsrABCD involved in autoinducer 2 (AI-2) import. Probably responsible for the translocation of the substrate across the membrane. The polypeptide is Autoinducer 2 import system permease protein LsrC (lsrC) (Salmonella paratyphi B (strain ATCC BAA-1250 / SPB7)).